The following is an 82-amino-acid chain: MKKILILLIRFYQKFISPMFPAKCRFYPTCSQYTLEAIKEHGTIKGTYLAIRRILKCHPFHEGGYDPVPKRKNKNSEGKREE.

The interval 61-82 is disordered; sequence HEGGYDPVPKRKNKNSEGKREE.

Belongs to the UPF0161 family.

The protein localises to the cell inner membrane. Functionally, could be involved in insertion of integral membrane proteins into the membrane. This chain is Putative membrane protein insertion efficiency factor, found in Fusobacterium nucleatum subsp. nucleatum (strain ATCC 25586 / DSM 15643 / BCRC 10681 / CIP 101130 / JCM 8532 / KCTC 2640 / LMG 13131 / VPI 4355).